Reading from the N-terminus, the 661-residue chain is UvrABC system protein B (661 aa).

In terms of domain architecture, Helicase ATP-binding spans A25–R182. G38–T45 contacts ATP. A Beta-hairpin motif is present at residues Y91–I114. The region spanning Q430 to I592 is the Helicase C-terminal domain. Residues K621 to A656 form the UVR domain.

The protein belongs to the UvrB family. As to quaternary structure, forms a heterotetramer with UvrA during the search for lesions. Interacts with UvrC in an incision complex.

It localises to the cytoplasm. Its function is as follows. The UvrABC repair system catalyzes the recognition and processing of DNA lesions. A damage recognition complex composed of 2 UvrA and 2 UvrB subunits scans DNA for abnormalities. Upon binding of the UvrA(2)B(2) complex to a putative damaged site, the DNA wraps around one UvrB monomer. DNA wrap is dependent on ATP binding by UvrB and probably causes local melting of the DNA helix, facilitating insertion of UvrB beta-hairpin between the DNA strands. Then UvrB probes one DNA strand for the presence of a lesion. If a lesion is found the UvrA subunits dissociate and the UvrB-DNA preincision complex is formed. This complex is subsequently bound by UvrC and the second UvrB is released. If no lesion is found, the DNA wraps around the other UvrB subunit that will check the other stand for damage. The protein is UvrABC system protein B of Rickettsia massiliae (strain Mtu5).